A 768-amino-acid chain; its full sequence is Phosphoribosylformylglycinamidine synthase subunit PurL (768 aa).

His-44 is a catalytic residue. Residues Tyr-47 and Lys-86 each contribute to the ATP site. Glu-88 provides a ligand contact to Mg(2+). Substrate-binding positions include 89–92 (SHNH) and Arg-111. The active-site Proton acceptor is the His-90. Position 112 (Asp-112) interacts with Mg(2+). Residue Gln-235 participates in substrate binding. Residue Asp-263 participates in Mg(2+) binding. 307-309 (ESQ) lines the substrate pocket. Asp-518 and Gly-555 together coordinate ATP. Asn-556 is a Mg(2+) binding site. Ser-558 is a substrate binding site.

The protein belongs to the FGAMS family. Monomer. Part of the FGAM synthase complex composed of 1 PurL, 1 PurQ and 2 PurS subunits.

Its subcellular location is the cytoplasm. The catalysed reaction is N(2)-formyl-N(1)-(5-phospho-beta-D-ribosyl)glycinamide + L-glutamine + ATP + H2O = 2-formamido-N(1)-(5-O-phospho-beta-D-ribosyl)acetamidine + L-glutamate + ADP + phosphate + H(+). It functions in the pathway purine metabolism; IMP biosynthesis via de novo pathway; 5-amino-1-(5-phospho-D-ribosyl)imidazole from N(2)-formyl-N(1)-(5-phospho-D-ribosyl)glycinamide: step 1/2. Its function is as follows. Part of the phosphoribosylformylglycinamidine synthase complex involved in the purines biosynthetic pathway. Catalyzes the ATP-dependent conversion of formylglycinamide ribonucleotide (FGAR) and glutamine to yield formylglycinamidine ribonucleotide (FGAM) and glutamate. The FGAM synthase complex is composed of three subunits. PurQ produces an ammonia molecule by converting glutamine to glutamate. PurL transfers the ammonia molecule to FGAR to form FGAM in an ATP-dependent manner. PurS interacts with PurQ and PurL and is thought to assist in the transfer of the ammonia molecule from PurQ to PurL. This Synechococcus sp. (strain JA-2-3B'a(2-13)) (Cyanobacteria bacterium Yellowstone B-Prime) protein is Phosphoribosylformylglycinamidine synthase subunit PurL.